A 609-amino-acid chain; its full sequence is N-acetyltransferase ESCO2 (609 aa).

Disordered regions lie at residues 1 to 71, 100 to 165, 197 to 241, and 314 to 357; these read MLSR…RVSP, EAKS…TDQV, KKPT…SPVR, and PDHD…LTAT. 2 stretches are compositionally biased toward polar residues: residues 13-22 and 41-54; these read AESNPSKKQI and ISLN…STPK. Residues 126 to 135 are compositionally biased toward basic residues; the sequence is PAKKVQKKPR. The segment covering 214–230 has biased composition (basic and acidic residues); the sequence is PTYEKPSIRKPVREKEL. Positions 345-355 are enriched in polar residues; that stretch reads PLNSSTPSALT. Residues 392–416 form a CCHH-type zinc finger; that stretch reads TTCASCGMLYSTDSPEDNFQHTQFH.

This sequence belongs to the acetyltransferase family. ECO subfamily.

The protein localises to the nucleus. The protein resides in the chromosome. The catalysed reaction is L-lysyl-[protein] + acetyl-CoA = N(6)-acetyl-L-lysyl-[protein] + CoA + H(+). Acetyltransferase required for the establishment of sister chromatid cohesion. Couples the processes of cohesion and DNA replication to ensure that only sister chromatids become paired together. Essential for early development. The protein is N-acetyltransferase ESCO2 (esco2) of Danio rerio (Zebrafish).